We begin with the raw amino-acid sequence, 709 residues long: Fatty acid oxidation complex subunit alpha (709 aa).

The segment at 1-188 is enoyl-CoA hydratase; it reads MEKTFNLTRR…KMGLVNDVVP (188 aa). The tract at residues 308–709 is 3-hydroxyacyl-CoA dehydrogenase; that stretch reads RKVKKAVILG…EMAAEKTRFF (402 aa).

The protein in the N-terminal section; belongs to the enoyl-CoA hydratase/isomerase family. This sequence in the central section; belongs to the 3-hydroxyacyl-CoA dehydrogenase family. In terms of assembly, heterotetramer of two alpha chains (FadJ) and two beta chains (FadI).

It is found in the cytoplasm. It carries out the reaction a (3S)-3-hydroxyacyl-CoA = a (2E)-enoyl-CoA + H2O. The enzyme catalyses a 4-saturated-(3S)-3-hydroxyacyl-CoA = a (3E)-enoyl-CoA + H2O. The catalysed reaction is a (3S)-3-hydroxyacyl-CoA + NAD(+) = a 3-oxoacyl-CoA + NADH + H(+). It catalyses the reaction (3S)-3-hydroxybutanoyl-CoA = (3R)-3-hydroxybutanoyl-CoA. It participates in lipid metabolism; fatty acid beta-oxidation. Its function is as follows. Catalyzes the formation of a hydroxyacyl-CoA by addition of water on enoyl-CoA. Also exhibits 3-hydroxyacyl-CoA epimerase and 3-hydroxyacyl-CoA dehydrogenase activities. The polypeptide is Fatty acid oxidation complex subunit alpha (Shewanella sp. (strain MR-7)).